Consider the following 368-residue polypeptide: Glutamine synthetase root isozyme 2 (368 aa).

The 81-residue stretch at 19 to 99 (IIAEYIWVGG…VMCDCYEPNG (81 aa)) folds into the GS beta-grasp domain. The disordered stretch occupies residues 38–66 (RTLSGPVDDPSKLPKWNFDGSSTGQAPGD). The region spanning 106-368 (KRHGAAKIFS…NGDGKGAAAP (263 aa)) is the GS catalytic domain.

Belongs to the glutamine synthetase family. In terms of assembly, homooctamer. Found mainly in the vascular tissues of seedling roots.

It is found in the cytoplasm. The catalysed reaction is L-glutamate + NH4(+) + ATP = L-glutamine + ADP + phosphate + H(+). In terms of biological role, plays a role in the flow of nitrogen into nitrogenous organic compounds. The sequence is that of Glutamine synthetase root isozyme 2 (GLN2) from Zea mays (Maize).